The primary structure comprises 152 residues: Superoxide dismutase [Cu-Zn] 2 (152 aa).

N-linked (GlcNAc...) asparagine glycans are attached at residues Asn-9 and Asn-33. Positions 45, 47, and 62 each coordinate Cu cation. A disulfide bridge links Cys-56 with Cys-145. Zn(2+) is bound by residues His-62, His-70, His-79, and Asp-82. A glycan (N-linked (GlcNAc...) asparagine) is linked at Asn-85. His-119 lines the Cu cation pocket.

It belongs to the Cu-Zn superoxide dismutase family. The cofactor is Cu cation. Zn(2+) is required as a cofactor. In terms of tissue distribution, expressed in fruits, leaves and pollen grains.

The protein resides in the cytoplasm. It localises to the endoplasmic reticulum. The enzyme catalyses 2 superoxide + 2 H(+) = H2O2 + O2. With respect to regulation, inhibited by KCN and H(2)O(2). Its function is as follows. Destroys radicals which are normally produced within the cells and which are toxic to biological systems. Probably involved in the protection against oxidative stress during pollen development. This Olea europaea (Common olive) protein is Superoxide dismutase [Cu-Zn] 2 (OLE5).